A 206-amino-acid chain; its full sequence is Outer-membrane lipoprotein carrier protein (206 aa).

The signal sequence occupies residues 1–21 (MKKLLCAVLLSPLLYSNAVLA).

It belongs to the LolA family. In terms of assembly, monomer.

It localises to the periplasm. Functionally, participates in the translocation of lipoproteins from the inner membrane to the outer membrane. Only forms a complex with a lipoprotein if the residue after the N-terminal Cys is not an aspartate (The Asp acts as a targeting signal to indicate that the lipoprotein should stay in the inner membrane). The protein is Outer-membrane lipoprotein carrier protein of Shewanella sp. (strain ANA-3).